Reading from the N-terminus, the 204-residue chain is N-(5'-phosphoribosyl)anthranilate isomerase (204 aa).

The protein belongs to the TrpF family.

It carries out the reaction N-(5-phospho-beta-D-ribosyl)anthranilate = 1-(2-carboxyphenylamino)-1-deoxy-D-ribulose 5-phosphate. It functions in the pathway amino-acid biosynthesis; L-tryptophan biosynthesis; L-tryptophan from chorismate: step 3/5. The sequence is that of N-(5'-phosphoribosyl)anthranilate isomerase from Bacillus cereus (strain AH187).